The chain runs to 371 residues: Dual-specificity RNA methyltransferase RlmN (371 aa).

The active-site Proton acceptor is Glu-114. The 233-residue stretch at 120–352 (EEDHFTLCVS…VMTRQSKGAD (233 aa)) folds into the Radical SAM core domain. Cys-127 and Cys-357 are disulfide-bonded. 3 residues coordinate [4Fe-4S] cluster: Cys-134, Cys-138, and Cys-141. Residues 183–184 (GE), Ser-216, 238–240 (SLN), and Asn-314 contribute to the S-adenosyl-L-methionine site. The active-site S-methylcysteine intermediate is Cys-357.

This sequence belongs to the radical SAM superfamily. RlmN family. The cofactor is [4Fe-4S] cluster.

Its subcellular location is the cytoplasm. The enzyme catalyses adenosine(2503) in 23S rRNA + 2 reduced [2Fe-2S]-[ferredoxin] + 2 S-adenosyl-L-methionine = 2-methyladenosine(2503) in 23S rRNA + 5'-deoxyadenosine + L-methionine + 2 oxidized [2Fe-2S]-[ferredoxin] + S-adenosyl-L-homocysteine. The catalysed reaction is adenosine(37) in tRNA + 2 reduced [2Fe-2S]-[ferredoxin] + 2 S-adenosyl-L-methionine = 2-methyladenosine(37) in tRNA + 5'-deoxyadenosine + L-methionine + 2 oxidized [2Fe-2S]-[ferredoxin] + S-adenosyl-L-homocysteine. Its function is as follows. Specifically methylates position 2 of adenine 2503 in 23S rRNA and position 2 of adenine 37 in tRNAs. m2A2503 modification seems to play a crucial role in the proofreading step occurring at the peptidyl transferase center and thus would serve to optimize ribosomal fidelity. This is Dual-specificity RNA methyltransferase RlmN from Desulfosudis oleivorans (strain DSM 6200 / JCM 39069 / Hxd3) (Desulfococcus oleovorans).